The primary structure comprises 159 residues: Ribosomal RNA large subunit methyltransferase H (159 aa).

Residues Leu-76, Gly-108, and 127–132 (FGLLTL) each bind S-adenosyl-L-methionine.

This sequence belongs to the RNA methyltransferase RlmH family. Homodimer.

It localises to the cytoplasm. It carries out the reaction pseudouridine(1915) in 23S rRNA + S-adenosyl-L-methionine = N(3)-methylpseudouridine(1915) in 23S rRNA + S-adenosyl-L-homocysteine + H(+). Functionally, specifically methylates the pseudouridine at position 1915 (m3Psi1915) in 23S rRNA. The protein is Ribosomal RNA large subunit methyltransferase H of Leuconostoc citreum (strain KM20).